A 227-amino-acid chain; its full sequence is Urease accessory protein UreF (227 aa).

It belongs to the UreF family. UreD, UreF and UreG form a complex that acts as a GTP-hydrolysis-dependent molecular chaperone, activating the urease apoprotein by helping to assemble the nickel containing metallocenter of UreC. The UreE protein probably delivers the nickel.

It is found in the cytoplasm. In terms of biological role, required for maturation of urease via the functional incorporation of the urease nickel metallocenter. This Blochmanniella floridana protein is Urease accessory protein UreF.